Here is a 295-residue protein sequence, read N- to C-terminus: Polyisoprenoid diphosphate/phosphate phosphohydrolase PLPP6 (295 aa).

Disordered regions lie at residues 1–39 and 61–90; these read MPSP…SRFE and SESP…PEED. The Cytoplasmic portion of the chain corresponds to 1–132; the sequence is MPSPRRSMEG…ESSSWGSVRP (132 aa). Positions 16 to 27 are enriched in low complexity; sequence SASSSSSSPGSP. Residues serine 26, serine 36, and serine 70 each carry the phosphoserine modification. A helical membrane pass occupies residues 133–153; it reads LMKLLEISGHGIPWLLGTLYC. Residues 154–164 lie on the Lumenal side of the membrane; that stretch reads LCRSDSWAGRE. A helical membrane pass occupies residues 165-185; it reads VLMNLLFALLLDLLLVALIKG. The interval 184–192 is phosphatase sequence motif I; that stretch reads KGLVRRRRP. The Cytoplasmic segment spans residues 186 to 228; that stretch reads LVRRRRPAHNQMDMFVTLSVDKYSFPSGHATRAALMSRFILNH. The interval 211 to 214 is phosphatase sequence motif II; sequence PSGH. The active-site Proton donors is the histidine 214. The chain crosses the membrane as a helical span at residues 229–249; the sequence is LVLAIPLRVLVVLWAFVLGLS. The segment at 249-260 is phosphatase sequence motif III; it reads SRVMLGRHNVTD. Residues 250 to 260 lie on the Lumenal side of the membrane; the sequence is RVMLGRHNVTD. Histidine 256 acts as the Nucleophile in catalysis. A helical membrane pass occupies residues 261–281; it reads VAFGFFLGYMQYSIVDYCWLS. The Cytoplasmic portion of the chain corresponds to 282-295; that stretch reads PHNAPVLFLLWSQR.

The protein belongs to the PA-phosphatase related phosphoesterase family. Post-translationally, phosphorylation by PKC activates the phosphatase activity towards presqualene diphosphate. In terms of tissue distribution, widely expressed. Expressed in most organs, in particular gastrointestinal organs, spleen, placenta, kidney, thymus and brain.

It localises to the endoplasmic reticulum membrane. The protein localises to the nucleus envelope. Its subcellular location is the nucleus inner membrane. The catalysed reaction is presqualene diphosphate + H2O = presqualene phosphate + phosphate + H(+). It carries out the reaction presqualene phosphate + H2O = presqualene alcohol + phosphate. It catalyses the reaction (2E,6E)-farnesyl diphosphate + H2O = (2E,6E)-farnesyl phosphate + phosphate + H(+). The enzyme catalyses (2E,6E)-farnesyl phosphate + H2O = (2E,6E)-farnesol + phosphate. The catalysed reaction is (2E,6E,10E)-geranylgeranyl diphosphate + H2O = (2E,6E,10E)-geranylgeranyl phosphate + phosphate + H(+). It carries out the reaction (2E,6E,10E)-geranylgeranyl phosphate + H2O = (2E,6E,10E)-geranylgeraniol + phosphate. It catalyses the reaction (2E)-geranyl diphosphate + H2O = (2E)-geranyl phosphate + phosphate + H(+). The enzyme catalyses (2E)-geranyl phosphate + H2O = (2E)-geraniol + phosphate. The catalysed reaction is 1,2-dihexadecanoyl-sn-glycero-3-phosphate + H2O = 1,2-dihexadecanoyl-sn-glycerol + phosphate. With respect to regulation, inhibited by propranolol. Not inhibited by N-ethylmaleimide or bromoenolactome. Its function is as follows. Magnesium-independent polyisoprenoid diphosphatase that catalyzes the sequential dephosphorylation of presqualene, farnesyl, geranyl and geranylgeranyl diphosphates. Functions in the innate immune response through the dephosphorylation of presqualene diphosphate which acts as a potent inhibitor of the signaling pathways contributing to polymorphonuclear neutrophils activation. May regulate the biosynthesis of cholesterol and related sterols by dephosphorylating presqualene and farnesyl diphosphate, two key intermediates in this biosynthetic pathway. May also play a role in protein prenylation by acting on farnesyl diphosphate and its derivative geranylgeranyl diphosphate, two precursors for the addition of isoprenoid anchors to membrane proteins. Has a lower activity towards phosphatidic acid (PA), but through phosphatidic acid dephosphorylation may participate in the biosynthesis of phospholipids and triacylglycerols. May also act on ceramide-1-P, lysophosphatidic acid (LPA) and sphing-4-enine 1-phosphate/sphingosine-1-phosphate. The sequence is that of Polyisoprenoid diphosphate/phosphate phosphohydrolase PLPP6 from Homo sapiens (Human).